The chain runs to 539 residues: Hydroxylamine reductase (539 aa).

[4Fe-4S] cluster is bound by residues cysteine 3, cysteine 6, cysteine 14, and cysteine 20. Hybrid [4Fe-2O-2S] cluster-binding residues include histidine 232, glutamate 256, cysteine 300, cysteine 392, cysteine 420, cysteine 445, glutamate 480, and lysine 482. Cysteine persulfide is present on cysteine 392.

It belongs to the HCP family. Requires [4Fe-4S] cluster as cofactor. Hybrid [4Fe-2O-2S] cluster is required as a cofactor.

The protein resides in the cytoplasm. The enzyme catalyses A + NH4(+) + H2O = hydroxylamine + AH2 + H(+). Functionally, catalyzes the reduction of hydroxylamine to form NH(3) and H(2)O. This chain is Hydroxylamine reductase, found in Chlorobaculum tepidum (strain ATCC 49652 / DSM 12025 / NBRC 103806 / TLS) (Chlorobium tepidum).